A 359-amino-acid polypeptide reads, in one-letter code: Type-1 angiotensin II receptor (359 aa).

Residues 1-25 (MILNSSTEDGIKRIQDDCPKAGRHN) lie on the Extracellular side of the membrane. N4 is a glycosylation site (N-linked (GlcNAc...) asparagine). Angiotensin II-binding residues include Q15 and D17. Intrachain disulfides connect C18–C274 and C101–C180. A helical membrane pass occupies residues 26–55 (YIFVMIPTLYSIIFVVGIFGNSLVVIVIYF). Topologically, residues 56–61 (YMKLKT) are cytoplasmic. The helical transmembrane segment at 62–89 (VASVFLLNLALADLCFLLTLPLWAVYTA) threads the bilayer. Residues 90–98 (MEYRWPFGN) lie on the Extracellular side of the membrane. Residues 99–125 (YLCKIASASVSFNLYASVFLLTCLSID) form a helical membrane-spanning segment. Residues 126 to 141 (RYVAIVHPMKSPVRRT) are Cytoplasmic-facing. Residues 142 to 165 (MLMAKVTCIIIWLLAGLASLPTII) traverse the membrane as a helical segment. Over 166–190 (HRNVFFIENTNITVCAFHYESQNST) the chain is Extracellular. Angiotensin II is bound at residue R167. An N-linked (GlcNAc...) asparagine glycan is attached at N176. The angiotensin II site is built by F182, H183, and Y184. N-linked (GlcNAc...) asparagine glycosylation is present at N188. A helical membrane pass occupies residues 191–216 (LPIGLGLTKNILGFLFPFLIILTSYT). Position 199 (K199) interacts with angiotensin II. Topologically, residues 217-239 (LIWKTLKRAYEIQKNKPRNDDIF) are cytoplasmic. The helical transmembrane segment at 240–268 (KIIMAIVLFFFFSWVPHQIFTFLDVLIQL) threads the bilayer. At 269–278 (GIIHDCKIAD) the chain is on the extracellular side. Residues 279-304 (IVDTAMPITICIAYFNNCLNPLFYGF) form a helical membrane-spanning segment. The Cytoplasmic portion of the chain corresponds to 305–359 (LGKKFKKYFLQLLKYIPPKAKSHSSLSTKMSTLSYRPSDHGNASTKKSASCVEVE). Residues 335–352 (STLSYRPSDHGNASTKKS) show a composition bias toward polar residues. Positions 335–359 (STLSYRPSDHGNASTKKSASCVEVE) are disordered. C355 carries S-palmitoyl cysteine lipidation.

This sequence belongs to the G-protein coupled receptor 1 family. In terms of assembly, interacts with MAS1. Interacts with ARRB1. Interacts with FLNA (via filamin repeat 21); increases PKA-mediated phosphorylation of FLNA. In terms of processing, C-terminal Ser or Thr residues may be phosphorylated. In terms of tissue distribution, adrenal, liver, aorta, kidney, lung, testis and heart.

The protein localises to the cell membrane. Its function is as follows. Receptor for angiotensin II, a vasoconstricting peptide, which acts as a key regulator of blood pressure and sodium retention by the kidney. The activated receptor in turn couples to G-alpha proteins G(q) (GNAQ, GNA11, GNA14 or GNA15) and thus activates phospholipase C and increases the cytosolic Ca(2+) concentrations, which in turn triggers cellular responses such as stimulation of protein kinase C. This Canis lupus familiaris (Dog) protein is Type-1 angiotensin II receptor (AGTR1).